Consider the following 148-residue polypeptide: Protein RESISTANCE TO POWDERY MILDEW 8.1 (148 aa).

The region spanning 1-148 (MPIGELAIGA…VISACSKIRA (148 aa)) is the RPW8 domain. The chain crosses the membrane as a helical span at residues 7–23 (AIGAVLGVGAQAIYDRF). Residues 120–140 (DDIKEIKAKISEMDTKLAEVI) adopt a coiled-coil conformation.

It belongs to the plant RPW8 protein family.

It localises to the membrane. Its function is as follows. Disease resistance (R) protein that induces localized, salicylic acid-dependent defenses. Confers resistance to powdery mildew (e.g. Erysiphe cichoracearum UCSC1). This is Protein RESISTANCE TO POWDERY MILDEW 8.1 from Arabidopsis thaliana (Mouse-ear cress).